A 272-amino-acid chain; its full sequence is Cytochrome c oxidase subunit 3 (272 aa).

A run of 7 helical transmembrane segments spans residues proline 23–methionine 43, alanine 45–phenylalanine 65, phenylalanine 91–phenylalanine 111, tryptophan 137–cysteine 157, serine 169–tyrosine 189, alanine 210–isoleucine 230, and alanine 249–tryptophan 269.

It belongs to the cytochrome c oxidase subunit 3 family. As to quaternary structure, component of the cytochrome c oxidase (complex IV, CIV), a multisubunit enzyme composed of a catalytic core of 3 subunits and several supernumerary subunits. The complex exists as a monomer or a dimer and forms supercomplexes (SCs) in the inner mitochondrial membrane with ubiquinol-cytochrome c oxidoreductase (cytochrome b-c1 complex, complex III, CIII).

It localises to the mitochondrion inner membrane. The catalysed reaction is 4 Fe(II)-[cytochrome c] + O2 + 8 H(+)(in) = 4 Fe(III)-[cytochrome c] + 2 H2O + 4 H(+)(out). Component of the cytochrome c oxidase, the last enzyme in the mitochondrial electron transport chain which drives oxidative phosphorylation. The respiratory chain contains 3 multisubunit complexes succinate dehydrogenase (complex II, CII), ubiquinol-cytochrome c oxidoreductase (cytochrome b-c1 complex, complex III, CIII) and cytochrome c oxidase (complex IV, CIV), that cooperate to transfer electrons derived from NADH and succinate to molecular oxygen, creating an electrochemical gradient over the inner membrane that drives transmembrane transport and the ATP synthase. Cytochrome c oxidase is the component of the respiratory chain that catalyzes the reduction of oxygen to water. Electrons originating from reduced cytochrome c in the intermembrane space (IMS) are transferred via the dinuclear copper A center (CU(A)) of subunit 2 and heme A of subunit 1 to the active site in subunit 1, a binuclear center (BNC) formed by heme A3 and copper B (CU(B)). The BNC reduces molecular oxygen to 2 water molecules using 4 electrons from cytochrome c in the IMS and 4 protons from the mitochondrial matrix. This chain is Cytochrome c oxidase subunit 3 (COX3), found in Chondrus crispus (Carrageen Irish moss).